A 234-amino-acid polypeptide reads, in one-letter code: MAKHTFFVTGTDTGVGKTIVSAAILEAAKAAGKRTLAMKPIASGCDQTPEGLRNEDALMLQAAITEKLPYDTINPIALEPAIAPHVAAQQAGKQVTAQRIVGFCRGMQIRPADLLLIEGAGGWRVPLNDRETYAAVPGELKLPVILVVPLQLGCINHAMLSAEAIRADGLVVAGWVGNHPEEQVMSCEQDTLNYLSTHLGAPCLGVLPWLENTDTAEMPAILSRYLNITPLIEN.

14 to 19 (GVGKTI) contributes to the ATP binding site. Threonine 18 provides a ligand contact to Mg(2+). Lysine 39 is a catalytic residue. Position 43 (serine 43) interacts with substrate. Residues aspartate 56, 118–121 (EGAG), 178–179 (NH), and 208–210 (PWL) contribute to the ATP site. Residues aspartate 56 and glutamate 118 each contribute to the Mg(2+) site.

It belongs to the dethiobiotin synthetase family. Homodimer. Mg(2+) serves as cofactor.

Its subcellular location is the cytoplasm. It catalyses the reaction (7R,8S)-7,8-diammoniononanoate + CO2 + ATP = (4R,5S)-dethiobiotin + ADP + phosphate + 3 H(+). It functions in the pathway cofactor biosynthesis; biotin biosynthesis; biotin from 7,8-diaminononanoate: step 1/2. Functionally, catalyzes a mechanistically unusual reaction, the ATP-dependent insertion of CO2 between the N7 and N8 nitrogen atoms of 7,8-diaminopelargonic acid (DAPA, also called 7,8-diammoniononanoate) to form a ureido ring. This chain is ATP-dependent dethiobiotin synthetase BioD, found in Marinobacter nauticus (strain ATCC 700491 / DSM 11845 / VT8) (Marinobacter aquaeolei).